The chain runs to 316 residues: Ornithine carbamoyltransferase (316 aa).

Carbamoyl phosphate is bound by residues 57-60 (STRT), Gln-84, Arg-108, and 135-138 (HPCQ). L-ornithine contacts are provided by residues Asn-166, Asp-230, and 234-235 (SM). Residues 269–270 (CL) and Arg-297 each bind carbamoyl phosphate.

The protein belongs to the aspartate/ornithine carbamoyltransferase superfamily. OTCase family.

It localises to the cytoplasm. The enzyme catalyses carbamoyl phosphate + L-ornithine = L-citrulline + phosphate + H(+). The protein operates within amino-acid degradation; L-arginine degradation via ADI pathway; carbamoyl phosphate from L-arginine: step 2/2. Functionally, reversibly catalyzes the transfer of the carbamoyl group from carbamoyl phosphate (CP) to the N(epsilon) atom of ornithine (ORN) to produce L-citrulline. This chain is Ornithine carbamoyltransferase, found in Bacillus cereus (strain AH187).